The sequence spans 288 residues: NH(3)-dependent NAD(+) synthetase (288 aa).

46–53 is an ATP binding site; sequence GISGGQDS. Asp-52 contributes to the Mg(2+) binding site. Arg-153 serves as a coordination point for deamido-NAD(+). Thr-173 contacts ATP. Glu-178 is a Mg(2+) binding site. Residues Lys-186 and Asp-193 each contribute to the deamido-NAD(+) site. Residues Lys-202 and Thr-224 each coordinate ATP. Position 273–274 (273–274) interacts with deamido-NAD(+); sequence HK.

Belongs to the NAD synthetase family. In terms of assembly, homodimer.

The enzyme catalyses deamido-NAD(+) + NH4(+) + ATP = AMP + diphosphate + NAD(+) + H(+). The protein operates within cofactor biosynthesis; NAD(+) biosynthesis; NAD(+) from deamido-NAD(+) (ammonia route): step 1/1. Catalyzes the ATP-dependent amidation of deamido-NAD to form NAD. Uses ammonia as a nitrogen source. The polypeptide is NH(3)-dependent NAD(+) synthetase (Deinococcus geothermalis (strain DSM 11300 / CIP 105573 / AG-3a)).